Consider the following 418-residue polypeptide: Probable carboxypeptidase AO090166000075 (418 aa).

The first 18 residues, 1 to 18, serve as a signal peptide directing secretion; it reads MKATDLFHVTALVAGALA. N-linked (GlcNAc...) asparagine glycosylation occurs at Asn74. Asp147 contributes to the Zn(2+) binding site. Asn168 carries N-linked (GlcNAc...) asparagine glycosylation. Catalysis depends on Glu179, which acts as the Proton acceptor. Glu180 contacts Zn(2+).

Belongs to the peptidase M20A family. Zn(2+) is required as a cofactor.

It localises to the secreted. This Aspergillus oryzae (strain ATCC 42149 / RIB 40) (Yellow koji mold) protein is Probable carboxypeptidase AO090166000075.